The sequence spans 565 residues: Deformed epidermal autoregulatory factor 1 homolog (565 aa).

Disordered stretches follow at residues 34–62 (GGEAEEPVLSRDEDSEEDADSEAERETPR) and 162–190 (GLKGPAAPLTPGPQSPPTPLAPGQEKGGT). The segment covering 169 to 181 (PLTPGPQSPPTPL) has biased composition (pro residues). Residue Thr-171 is modified to Phosphothreonine. Ser-176 carries the phosphoserine modification. Thr-179 bears the Phosphothreonine mark. Residues 193–273 (NWDPSVYDSE…QCLIQDGILN (81 aa)) enclose the SAND domain. The short motif at 301–316 (KRRKKENELPTTPVKK) is the Nuclear localization signal element. The tract at residues 403 to 478 (IAPFPEAALP…QLKTLFEQAK (76 aa)) is interaction with LMO4. Phosphothreonine is present on Thr-432. Ser-448 is subject to Phosphoserine. 8 residues coordinate Zn(2+): Cys-504, Cys-507, Cys-515, Cys-518, Cys-524, Cys-528, His-536, and Cys-540. Residues 504–540 (CVNCGREAMNECTGCHKVNYCSTFCQRKDWKDHQHIC) form an MYND-type zinc finger.

As to quaternary structure, homodimer. Interacts with LMO4; LMO4 blocks export from nucleus. Interacts with LMO2 and CLIM2. May interact with the corepressors NCOR1 and NCRO2. Identified in a complex with XRCC5 and XRCC6. Interacts (via the SAND domain) with the DNA-PK complex subunit XRCC6; the interaction is direct and may be inhibited by DNA-binding. Post-translationally, may be phosphorylated by DNA-PK complex in a DNA independent manner (in vitro).

It localises to the nucleus. Functionally, transcription factor that binds to sequence with multiple copies of 5'-TTC[CG]G-3' present in its own promoter and that of the HNRPA2B1 gene. Down-regulates transcription of these genes. Binds to the retinoic acid response element (RARE) 5'-AGGGTTCACCGAAAGTTCA-3'. Activates the proenkephalin gene independently of promoter binding, probably through protein-protein interaction. Regulates epithelial cell proliferation and side-branching in the mammary gland. Required for neural tube closure and skeletal patterning. Controls the expression of peripheral tissue antigens in pancreatic lymph nodes. Transcriptional activator of EIF4G3. May also involved in behavior. In Pan troglodytes (Chimpanzee), this protein is Deformed epidermal autoregulatory factor 1 homolog (DEAF1).